Here is a 159-residue protein sequence, read N- to C-terminus: Putative ribosomal RNA large subunit methyltransferase H (159 aa).

S-adenosyl-L-methionine contacts are provided by residues leucine 76, glycine 108, and 127 to 132; that span reads LSAMTF.

This sequence belongs to the RNA methyltransferase RlmH family.

The protein resides in the cytoplasm. The enzyme catalyses pseudouridine(1915) in 23S rRNA + S-adenosyl-L-methionine = N(3)-methylpseudouridine(1915) in 23S rRNA + S-adenosyl-L-homocysteine + H(+). Specifically methylates the pseudouridine at position 1915 (m3Psi1915) in 23S rRNA. The chain is Putative ribosomal RNA large subunit methyltransferase H from Methanospirillum hungatei JF-1 (strain ATCC 27890 / DSM 864 / NBRC 100397 / JF-1).